Reading from the N-terminus, the 2925-residue chain is TPR and ankyrin repeat-containing protein 1 (2925 aa).

TPR repeat units follow at residues 15–48 (AVLL…DPTY) and 50–82 (KGYY…VQRS). ANK repeat units follow at residues 168–198 (EKYV…SVET), 203–232 (PLHA…EWKG), 240–276 (DGCT…DPTL), 463–492 (SQER…DPRA), 497–518 (EGDT…DIGF), and 546–575 (NGNT…KFDI). Disordered stretches follow at residues 612 to 669 (SRQD…LPGT), 706 to 741 (PEDC…DCSE), and 1077 to 1103 (VEPG…SIEV). A compositionally biased stretch (polar residues) spans 624 to 641 (SKSTAPGHTSQLKSQGSF). Over residues 720–730 (AGKEGKKDDKP) the composition is skewed to basic and acidic residues. Positions 1085–1103 (GGEEEEEEEDEEEEDSIEV) are enriched in acidic residues. TPR repeat units lie at residues 1699–1732 (PAEW…EKEK) and 1793–1826 (LGKI…DLAL). A coiled-coil region spans residues 2301–2330 (EEFEKLLHQEEDNYNRELKALESEKDERGR).

This Homo sapiens (Human) protein is TPR and ankyrin repeat-containing protein 1 (TRANK1).